The chain runs to 307 residues: Thioredoxin reductase (307 aa).

36-43 (DNAAPGGK) contacts FAD. Cys-138 and Cys-141 are disulfide-bonded. 278–287 (DIRIKDIRQI) is a binding site for FAD.

It belongs to the class-II pyridine nucleotide-disulfide oxidoreductase family. As to quaternary structure, homodimer. FAD serves as cofactor.

The protein resides in the cytoplasm. It catalyses the reaction [thioredoxin]-dithiol + NADP(+) = [thioredoxin]-disulfide + NADPH + H(+). In Mycoplasmopsis pulmonis (strain UAB CTIP) (Mycoplasma pulmonis), this protein is Thioredoxin reductase (trxB).